The primary structure comprises 159 residues: Putative transcriptional regulatory protein rrnAC0199 (159 aa).

It belongs to the Tfx family.

Putative transcriptional regulator. This is Putative transcriptional regulatory protein rrnAC0199 from Haloarcula marismortui (strain ATCC 43049 / DSM 3752 / JCM 8966 / VKM B-1809) (Halobacterium marismortui).